The primary structure comprises 391 residues: 3-ketoacyl-CoA thiolase (391 aa).

C95 serves as the catalytic Acyl-thioester intermediate. Active-site proton acceptor residues include H347 and C377.

The protein belongs to the thiolase-like superfamily. Thiolase family. Heterotetramer of two alpha chains (FadB) and two beta chains (FadA).

The protein localises to the cytoplasm. It catalyses the reaction an acyl-CoA + acetyl-CoA = a 3-oxoacyl-CoA + CoA. The protein operates within lipid metabolism; fatty acid beta-oxidation. Functionally, catalyzes the final step of fatty acid oxidation in which acetyl-CoA is released and the CoA ester of a fatty acid two carbons shorter is formed. This Stutzerimonas stutzeri (strain A1501) (Pseudomonas stutzeri) protein is 3-ketoacyl-CoA thiolase.